Reading from the N-terminus, the 406-residue chain is Imidazolonepropionase (406 aa).

Fe(3+) is bound by residues H67 and H69. The Zn(2+) site is built by H67 and H69. 3 residues coordinate 4-imidazolone-5-propanoate: R76, Y139, and H172. N-formimidoyl-L-glutamate is bound at residue Y139. H237 serves as a coordination point for Fe(3+). H237 provides a ligand contact to Zn(2+). Q240 serves as a coordination point for 4-imidazolone-5-propanoate. A Fe(3+)-binding site is contributed by D312. D312 contributes to the Zn(2+) binding site. 2 residues coordinate N-formimidoyl-L-glutamate: N314 and G316. T317 provides a ligand contact to 4-imidazolone-5-propanoate.

The protein belongs to the metallo-dependent hydrolases superfamily. HutI family. Zn(2+) is required as a cofactor. The cofactor is Fe(3+).

It is found in the cytoplasm. The catalysed reaction is 4-imidazolone-5-propanoate + H2O = N-formimidoyl-L-glutamate. It participates in amino-acid degradation; L-histidine degradation into L-glutamate; N-formimidoyl-L-glutamate from L-histidine: step 3/3. Functionally, catalyzes the hydrolytic cleavage of the carbon-nitrogen bond in imidazolone-5-propanoate to yield N-formimidoyl-L-glutamate. It is the third step in the universal histidine degradation pathway. The polypeptide is Imidazolonepropionase (Paraburkholderia phymatum (strain DSM 17167 / CIP 108236 / LMG 21445 / STM815) (Burkholderia phymatum)).